Consider the following 274-residue polypeptide: MEKIIEINDSIIQISDLNDRIYIMKLGKDVGELIKHVDSVCNEKKLSKVFAKVSGNKKELFEKNGYICEGKLENYYSNDDAYFMSKFFEESRKISKFSKEAEDVLNYVKTVGVNPHTKIDEKFHLKIANETDAEKLSKHYSKVFKTYPFPIDDPNYILKTMQTNVKYFIIEDNGKIVAASSCEMDIKNKCVEMTDFAVLEEYQKLGLSKYLLYIMEKIMKDNGYRVFYTIARSISYGMNITFKKMGYMYSGTAVNNTNICGNFEDMNFWYKLSE.

In terms of domain architecture, N-acetyltransferase spans 123 to 274; sequence FHLKIANETD…DMNFWYKLSE (152 aa).

It belongs to the acetyltransferase family.

The catalysed reaction is (3S)-3,6-diaminohexanoate + acetyl-CoA = (3S)-6-acetamido-3-aminohexanoate + CoA + H(+). Its function is as follows. Catalyzes the acetylation of beta-lysine to N6-acetyl-beta-lysine, a compatible solute produced by methanogenic archaea that helps cells to cope with salt stress. This is Beta-lysine N(6)-acetyltransferase from Methanococcus maripaludis (strain DSM 14266 / JCM 13030 / NBRC 101832 / S2 / LL).